Here is a 360-residue protein sequence, read N- to C-terminus: NAD(P)H-quinone oxidoreductase subunit 1, chloroplastic (360 aa).

A run of 8 helical transmembrane segments spans residues 27 to 47 (VWIF…VLVI), 98 to 118 (FSIG…VIPF), 129 to 149 (IGIF…LMSG), 165 to 185 (AAQS…ISLL), 203 to 223 (FWGW…ISSL), 253 to 273 (FGLF…FVTI), 297 to 317 (VFGT…VLVI), and 340 to 360 (FLLP…LLSL).

This sequence belongs to the complex I subunit 1 family. NDH is composed of at least 16 different subunits, 5 of which are encoded in the nucleus.

The protein resides in the plastid. The protein localises to the chloroplast thylakoid membrane. The enzyme catalyses a plastoquinone + NADH + (n+1) H(+)(in) = a plastoquinol + NAD(+) + n H(+)(out). It catalyses the reaction a plastoquinone + NADPH + (n+1) H(+)(in) = a plastoquinol + NADP(+) + n H(+)(out). In terms of biological role, NDH shuttles electrons from NAD(P)H:plastoquinone, via FMN and iron-sulfur (Fe-S) centers, to quinones in the photosynthetic chain and possibly in a chloroplast respiratory chain. The immediate electron acceptor for the enzyme in this species is believed to be plastoquinone. Couples the redox reaction to proton translocation, and thus conserves the redox energy in a proton gradient. The chain is NAD(P)H-quinone oxidoreductase subunit 1, chloroplastic from Draba nemorosa (Woodland whitlowgrass).